Here is a 395-residue protein sequence, read N- to C-terminus: S-adenosylmethionine synthase (395 aa).

Residue histidine 16 coordinates ATP. Aspartate 18 is a binding site for Mg(2+). Position 44 (glutamate 44) interacts with K(+). L-methionine contacts are provided by glutamate 57 and glutamine 100. The tract at residues glutamine 100 to arginine 110 is flexible loop. ATP-binding positions include aspartate 167–lysine 169, arginine 233–phenylalanine 234, aspartate 242, arginine 248–lysine 249, alanine 265, and lysine 269. Aspartate 242 lines the L-methionine pocket. L-methionine is bound at residue lysine 273.

This sequence belongs to the AdoMet synthase family. As to quaternary structure, homotetramer; dimer of dimers. It depends on Mg(2+) as a cofactor. Requires K(+) as cofactor.

The protein localises to the cytoplasm. The catalysed reaction is L-methionine + ATP + H2O = S-adenosyl-L-methionine + phosphate + diphosphate. Its pathway is amino-acid biosynthesis; S-adenosyl-L-methionine biosynthesis; S-adenosyl-L-methionine from L-methionine: step 1/1. Catalyzes the formation of S-adenosylmethionine (AdoMet) from methionine and ATP. The overall synthetic reaction is composed of two sequential steps, AdoMet formation and the subsequent tripolyphosphate hydrolysis which occurs prior to release of AdoMet from the enzyme. The chain is S-adenosylmethionine synthase from Burkholderia thailandensis (strain ATCC 700388 / DSM 13276 / CCUG 48851 / CIP 106301 / E264).